The chain runs to 291 residues: Undecaprenyl-diphosphatase (291 aa).

8 helical membrane-spanning segments follow: residues 1-21, 48-68, 102-122, 126-146, 162-182, 203-223, 231-251, and 267-287; these read MFIIELIKGIILGVVEGLTEF, SAFTFKIVIQLGSVFAAAWVF, LHVLVGMVPAGILGLLFDDFI, LFSVPTVMIGLFVGAIYMIIA, INYFQAFVIGISQAVAMWPGF, SDFTFIMAVPIMLAASGLSLL, IADIPFYILGFLAAFTVGLIA, and FAIYRIVLVIFIAILYFGFGI.

It belongs to the UppP family.

The protein localises to the cell membrane. The enzyme catalyses di-trans,octa-cis-undecaprenyl diphosphate + H2O = di-trans,octa-cis-undecaprenyl phosphate + phosphate + H(+). In terms of biological role, catalyzes the dephosphorylation of undecaprenyl diphosphate (UPP). Confers resistance to bacitracin. In Staphylococcus aureus (strain bovine RF122 / ET3-1), this protein is Undecaprenyl-diphosphatase.